The following is a 460-amino-acid chain: MSFDFIKDRDKKVHFIGIGGISMSGLAAVLLNSGYKVSGSDFKESEILKKLRLSGADIYIGHSEKNIKDVDLVVYTAAIPENNPELIYAKENNIDLMNRAEFLGNIMKGHKYNVAISGAHGKTTCTSMLSNITLKANLDPTILVGGELDIIGGNFRIGSSDYFITEACEYKRSFLSFFPYVGVILNIDADHLDYYKDIDEITETFGQFADLIPNDGYLIGYIGDSRVKEILSKAKCNTLSYGFENADVTARNITFNEKGCASFDVYKHNDKLFDLTLSNPGEHNILNALSSICVSLIFDVNYDDIICGLSECKGAHKRFEYKGEVNGVTVIDDYAHHPVEIKATLNTSKKIPHNKTFCVFQPHTYTRTKTLFDEFTDAFFDADEVVLMDIYAAREKDTGLVSSNDLGVALRAKGVKCTNVHSHDEALEYLKNSAKPNDLLLTVGAGDVVIVGEKYLNQGK.

An ATP-binding site is contributed by 118–124 (GAHGKTT).

The protein belongs to the MurCDEF family.

Its subcellular location is the cytoplasm. The enzyme catalyses UDP-N-acetyl-alpha-D-muramate + L-alanine + ATP = UDP-N-acetyl-alpha-D-muramoyl-L-alanine + ADP + phosphate + H(+). It functions in the pathway cell wall biogenesis; peptidoglycan biosynthesis. Its function is as follows. Cell wall formation. The chain is UDP-N-acetylmuramate--L-alanine ligase from Clostridium botulinum (strain Alaska E43 / Type E3).